The chain runs to 395 residues: E3 ubiquitin-protein ligase RNFT1 (395 aa).

2 disordered regions span residues 1–58 (MQAS…SSRN) and 78–97 (YSHS…GEHG). 6 consecutive transmembrane segments (helical) span residues 118–138 (ILIL…LGIG), 165–185 (CAWL…TFHS), 193–213 (IFLN…IVGI), 216–236 (FILK…PSFI), 258–278 (IFVP…FGNV), and 283–303 (LGIL…FGHL). The interval 328–379 (CSDMDGICTICQAEFQKPVLLFCQHIFCEECITLWFNREKTCPLCRTVISEC) is required for ubiquitin ligase activity and for protection against ER stress-induced cell death. The RING-type zinc-finger motif lies at 335–373 (CTICQAEFQKPVLLFCQHIFCEECITLWFNREKTCPLCR).

Predominantly expressed in testis.

Its subcellular location is the early endosome membrane. It catalyses the reaction S-ubiquitinyl-[E2 ubiquitin-conjugating enzyme]-L-cysteine + [acceptor protein]-L-lysine = [E2 ubiquitin-conjugating enzyme]-L-cysteine + N(6)-ubiquitinyl-[acceptor protein]-L-lysine.. The protein operates within protein modification; protein ubiquitination. In terms of biological role, E3 ubiquitin-protein ligase that acts in the endoplasmic reticulum (ER)-associated degradation (ERAD) pathway, which targets misfolded proteins that accumulate in the endoplasmic reticulum (ER) for ubiquitination and subsequent proteasome-mediated degradation. Protects cells from ER stress-induced apoptosis. This is E3 ubiquitin-protein ligase RNFT1 (Rnft1) from Mus musculus (Mouse).